A 107-amino-acid polypeptide reads, in one-letter code: Ferredoxin (107 aa).

4Fe-4S ferredoxin-type domains lie at 2-30 and 31-60; these read TYVVTDECVKCKYTDCVEVCPVDCFYEGE and FMLVINPDECIDCGVCVPDCPIDAIKPETP. 2 residues coordinate [3Fe-4S] cluster: cysteine 9 and cysteine 17. Positions 21, 40, 43, and 46 each coordinate [4Fe-4S] cluster. Cysteine 50 contacts [3Fe-4S] cluster.

Requires [4Fe-4S] cluster as cofactor. It depends on [3Fe-4S] cluster as a cofactor.

In terms of biological role, ferredoxins are iron-sulfur proteins that transfer electrons in a wide variety of metabolic reactions. The protein is Ferredoxin (fdxA) of Rickettsia bellii (strain RML369-C).